We begin with the raw amino-acid sequence, 227 residues long: uncharacterized protein (227 aa).

The Response regulatory domain maps to 2 to 115 (KILMIEDNVS…TLVARIKAVI (114 aa)). Asp51 is subject to 4-aspartylphosphate. The segment at residues 128–226 (EDMIETECFT…VWGVGYKFDE (99 aa)) is a DNA-binding region (ompR/PhoB-type).

In terms of processing, phosphorylated by YclK.

It localises to the cytoplasm. Its function is as follows. Could be member of the two-component regulatory system YclK/YclJ. This is an uncharacterized protein from Bacillus subtilis (strain 168).